Consider the following 397-residue polypeptide: 1-deoxy-D-xylulose 5-phosphate reductoisomerase (397 aa).

NADPH contacts are provided by Thr-10, Gly-11, Ser-12, Ile-13, Asn-38, and Asn-125. Residue Lys-126 coordinates 1-deoxy-D-xylulose 5-phosphate. Glu-127 is an NADPH binding site. Asp-151 is a binding site for Mn(2+). Residues Ser-152, Glu-153, Ser-187, and His-210 each contribute to the 1-deoxy-D-xylulose 5-phosphate site. Residue Glu-153 participates in Mn(2+) binding. Gly-216 lines the NADPH pocket. Ser-223, Asn-228, Lys-229, and Glu-232 together coordinate 1-deoxy-D-xylulose 5-phosphate. Residue Glu-232 coordinates Mn(2+).

This sequence belongs to the DXR family. Homodimer. The cofactor is Mg(2+). Mn(2+) is required as a cofactor.

The enzyme catalyses 2-C-methyl-D-erythritol 4-phosphate + NADP(+) = 1-deoxy-D-xylulose 5-phosphate + NADPH + H(+). The protein operates within isoprenoid biosynthesis; isopentenyl diphosphate biosynthesis via DXP pathway; isopentenyl diphosphate from 1-deoxy-D-xylulose 5-phosphate: step 1/6. Catalyzes the NADPH-dependent rearrangement and reduction of 1-deoxy-D-xylulose-5-phosphate (DXP) to 2-C-methyl-D-erythritol 4-phosphate (MEP). This is 1-deoxy-D-xylulose 5-phosphate reductoisomerase from Blochmanniella pennsylvanica (strain BPEN).